Reading from the N-terminus, the 207-residue chain is Large ribosomal subunit protein uL4 (207 aa).

The interval 48-70 is disordered; that stretch reads KAQKTRSEVSGGGAKPWRQKGTG.

Belongs to the universal ribosomal protein uL4 family. In terms of assembly, part of the 50S ribosomal subunit.

In terms of biological role, one of the primary rRNA binding proteins, this protein initially binds near the 5'-end of the 23S rRNA. It is important during the early stages of 50S assembly. It makes multiple contacts with different domains of the 23S rRNA in the assembled 50S subunit and ribosome. Functionally, forms part of the polypeptide exit tunnel. The chain is Large ribosomal subunit protein uL4 from Francisella tularensis subsp. mediasiatica (strain FSC147).